The following is a 227-amino-acid chain: UPF0758 protein Psyc_1834 (227 aa).

The region spanning Gly102–Ala224 is the MPN domain. The Zn(2+) site is built by His173, His175, and Asp186. The JAMM motif motif lies at His173–Asp186.

It belongs to the UPF0758 family.

In Psychrobacter arcticus (strain DSM 17307 / VKM B-2377 / 273-4), this protein is UPF0758 protein Psyc_1834.